The chain runs to 432 residues: MDEVAVDLKQALPNVYNNLQVHVDVHQKSNSPATSQDIQSHVMQLLNRHCVVFGDYSWTEFDDSFLMKNIHSISIADTELKLKDRQPIDLSKCKVLIHIFQLNEDGPCVESLEEENEDLVAANHWLLPAADFHGLWDSLIYDSEIKSRLLDYIETAMLFSDKNVDSNLISWNRVVLLHGPPGTGKTSLCKALAQKLTIRLSYRYRYGQLVEINSHSLFSKWFSESGKLVTKMFQKIHELINDKEALVFVLIDEVESLTAARKASRAGTEPSDAIRVVNAVLTQIDHIKRYPNVVILSTSNLTEKIDVAFTDRADIKQYIGPPSPAAIFKIYLSCIEELMKCQIIYPKQQLLTLRDLEIIGFLENNISKLSLQLNEISRKSEGLSGRVLRKLPFLAHALYLQSPTVTIERFLWALSLAVDEQFQERKNFSENI.

Residue 179–186 participates in ATP binding; it reads GPPGTGKT.

The protein belongs to the AAA ATPase family. PCH2 subfamily.

Its function is as follows. Plays a key role in chromosome recombination and chromosome structure development during meiosis. Required at early steps in meiotic recombination that leads to non-crossovers pathways. Also needed for efficient completion of homologous synapsis by influencing crossover distribution along the chromosomes affecting both crossovers and non-crossovers pathways. The chain is Pachytene checkpoint protein 2 homolog (trip13) from Xenopus tropicalis (Western clawed frog).